A 252-amino-acid polypeptide reads, in one-letter code: Triosephosphate isomerase (252 aa).

Substrate is bound at residue 9–11 (NWK). The active-site Electrophile is histidine 95. The Proton acceptor role is filled by glutamate 167. Substrate is bound by residues glycine 173, serine 213, and 234–235 (GG). Serine 213 is subject to Phosphoserine.

It belongs to the triosephosphate isomerase family. In terms of assembly, homodimer.

The protein localises to the cytoplasm. The enzyme catalyses D-glyceraldehyde 3-phosphate = dihydroxyacetone phosphate. It functions in the pathway carbohydrate biosynthesis; gluconeogenesis. The protein operates within carbohydrate degradation; glycolysis; D-glyceraldehyde 3-phosphate from glycerone phosphate: step 1/1. Involved in the gluconeogenesis. Catalyzes stereospecifically the conversion of dihydroxyacetone phosphate (DHAP) to D-glyceraldehyde-3-phosphate (G3P). The sequence is that of Triosephosphate isomerase from Oceanobacillus iheyensis (strain DSM 14371 / CIP 107618 / JCM 11309 / KCTC 3954 / HTE831).